A 1026-amino-acid polypeptide reads, in one-letter code: uncharacterized protein (1026 aa).

WD repeat units follow at residues 14–53, 62–104, 148–187, and 937–977; these read LLDEGLDVSSIHCFDQYLIVGQCSGQVMVFDVSTDNHFTL, HSVS…RRAT, GHEDWPILFPFKDEALLIPVAYSDGSVSLWSVDWSALTFK, and NAEC…VKFL.

Its subcellular location is the cytoplasm. The protein resides in the nucleus. This is an uncharacterized protein from Schizosaccharomyces pombe (strain 972 / ATCC 24843) (Fission yeast).